A 1028-amino-acid polypeptide reads, in one-letter code: Pentatricopeptide repeat-containing protein At3g09040, mitochondrial (1028 aa).

Residues M1–G30 constitute a mitochondrion transit peptide. PPR repeat units follow at residues E94–K123, D124–P158, N159–R193, N194–P224, N225–P259, D260–P290, D291–S325, T326–S360, N361–K391, N392–I426, D427–K461, N462–R492, D493–S527, D528–R562, D563–W593, S594–P627, S628–S662, G664–P694, S696–P730, D731–L765, D766–R796, N798–P832, D833–Q863, and R869–K899. Residues L904–E979 form a type E motif region. The type E(+) motif stretch occupies residues Q980 to K1010.

This sequence belongs to the PPR family. PCMP-E subfamily.

The protein resides in the mitochondrion. The polypeptide is Pentatricopeptide repeat-containing protein At3g09040, mitochondrial (PCMP-E88) (Arabidopsis thaliana (Mouse-ear cress)).